The following is a 513-amino-acid chain: ATP synthase subunit alpha (513 aa).

169–176 lines the ATP pocket; that stretch reads GDRQIGKT.

It belongs to the ATPase alpha/beta chains family. In terms of assembly, F-type ATPases have 2 components, CF(1) - the catalytic core - and CF(0) - the membrane proton channel. CF(1) has five subunits: alpha(3), beta(3), gamma(1), delta(1), epsilon(1). CF(0) has three main subunits: a(1), b(2) and c(9-12). The alpha and beta chains form an alternating ring which encloses part of the gamma chain. CF(1) is attached to CF(0) by a central stalk formed by the gamma and epsilon chains, while a peripheral stalk is formed by the delta and b chains.

The protein resides in the cell inner membrane. It catalyses the reaction ATP + H2O + 4 H(+)(in) = ADP + phosphate + 5 H(+)(out). In terms of biological role, produces ATP from ADP in the presence of a proton gradient across the membrane. The alpha chain is a regulatory subunit. The polypeptide is ATP synthase subunit alpha (Francisella tularensis subsp. mediasiatica (strain FSC147)).